The sequence spans 343 residues: 4-hydroxy-2-oxovalerate aldolase 2 (343 aa).

Positions 5 to 255 (ITIVDTTLRD…DTGVDLFPLI (251 aa)) constitute a Pyruvate carboxyltransferase domain. Substrate-binding positions include 13-14 (RD), Ser-167, and His-194. A Mn(2+)-binding site is contributed by Asp-14. The Mn(2+) site is built by His-194 and His-196. Tyr-285 is a binding site for substrate.

This sequence belongs to the 4-hydroxy-2-oxovalerate aldolase family.

It carries out the reaction (S)-4-hydroxy-2-oxopentanoate = acetaldehyde + pyruvate. In Rhodococcus jostii (strain RHA1), this protein is 4-hydroxy-2-oxovalerate aldolase 2.